A 139-amino-acid chain; its full sequence is Maximins 4/H3 type 6 (139 aa).

The N-terminal stretch at Met1 to Ala18 is a signal peptide. Positions Arg19–Arg43 are excised as a propeptide. At Asn70 the chain carries Asparagine amide. Residues Thr74 to Arg118 constitute a propeptide that is removed on maturation. Ile138 is subject to Isoleucine amide.

This sequence belongs to the bombinin family. Expressed by the skin glands.

The protein localises to the secreted. Functionally, maximin-4 shows antibacterial activity against both Gram-positive and Gram-negative bacteria. It also shows antimicrobial activity against the fungus C.albicans, but not against A.flavus nor P.uticale. It has little hemolytic activity. It does not possess a significant cytotoxicity against tumor cell lines. It does not possess a significant anti-HIV activity. Its function is as follows. Maximin-H3 shows antibacterial activity against both Gram-positive and Gram-negative bacteria. It also shows antimicrobial activity against the fungus C.albicans. Shows strong hemolytic activity. This is Maximins 4/H3 type 6 from Bombina maxima (Giant fire-bellied toad).